Here is a 175-residue protein sequence, read N- to C-terminus: O-acetyl-ADP-ribose deacetylase (175 aa).

The Macro domain occupies 1-175 (MAVQPEVILG…IYRRLLASYP (175 aa)). Substrate is bound by residues 11-12 (DI), asparagine 25, 33-35 (GVD), and 122-126 (STGVY). Aspartate 35 functions as the Proton acceptor in the catalytic mechanism.

This sequence belongs to the MacroD-type family. YmdB subfamily. In terms of assembly, homodimer. Interacts with RNase III.

The enzyme catalyses 3''-O-acetyl-ADP-D-ribose + H2O = ADP-D-ribose + acetate + H(+). The catalysed reaction is 2''-O-acetyl-ADP-D-ribose + H2O = ADP-D-ribose + acetate + H(+). In terms of biological role, deacetylates O-acetyl-ADP ribose to yield ADP-ribose and free acetate. Down-regulates ribonuclease 3 (RNase III) activity. Acts by interacting directly with the region of the ribonuclease that is required for dimerization/activation. The protein is O-acetyl-ADP-ribose deacetylase of Klebsiella pneumoniae (strain 342).